The primary structure comprises 586 residues: Monoterpene synthase TPS4, chloroplastic (586 aa).

A chloroplast-targeting transit peptide spans 1–47 (MAATRNLSLLAQSSQPWAGIYGSHGSPRPISSWLRRQSIAKTSYICM). Mg(2+)-binding residues include aspartate 340, aspartate 344, aspartate 485, threonine 489, and glutamate 493. A DDXXD motif motif is present at residues 340 to 344 (DDIFD).

The protein belongs to the terpene synthase family. Tpsg subfamily. In terms of assembly, monomer. Mg(2+) serves as cofactor.

It is found in the plastid. It localises to the chloroplast. The catalysed reaction is (2E)-geranyl diphosphate + H2O = (2E)-geraniol + diphosphate. It functions in the pathway secondary metabolite biosynthesis; terpenoid biosynthesis. Functionally, monoterpene synthase involved in the biosynthesis of volatile organic compounds. Mediates the conversion of (2E)-geranyl diphosphate (GPP) into the acyclic monoterpene, geraniol. Does not use (2E,6E)-farnesyl diphosphate (FPP) as substrate. This chain is Monoterpene synthase TPS4, chloroplastic, found in Cananga odorata (Ylang-ylang tree).